We begin with the raw amino-acid sequence, 624 residues long: D-3-phosphoglycerate dehydrogenase 2, chloroplastic (624 aa).

Residues 1–49 (MAFSSSCSSVKAVNSRWTSPSPSPSSRFAVLPAFLHRRYATSVKLTAIS) constitute a chloroplast transit peptide. Position 71 is a phosphoserine (S71). NAD(+) is bound by residues 231-232 (KV), D251, 310-312 (VAR), and D336. R312 is a catalytic residue. E341 is a catalytic residue. Catalysis depends on H360, which acts as the Proton donor. Residue 360–363 (HLGA) participates in NAD(+) binding. Residues 552–624 (LILCRQVDQP…AIEEFVFLKL (73 aa)) form the ACT domain.

The protein belongs to the D-isomer specific 2-hydroxyacid dehydrogenase family. As to expression, ubiquitous, but highly expressed in roots and in dark-grown leaf tissues. Expressed in the vasculature, stigma, anther filaments and shoot apical meristem. Not detected in the root meristem or in embryo.

It is found in the plastid. It localises to the chloroplast. The catalysed reaction is (2R)-3-phosphoglycerate + NAD(+) = 3-phosphooxypyruvate + NADH + H(+). Its pathway is amino-acid biosynthesis; L-serine biosynthesis; L-serine from 3-phospho-D-glycerate: step 1/3. Inhibited by 90 uM 3-phosphonooxypyruvate, but not by Ser, Thr, Val, Gly Trp, O-acetyl-L-Ser and Cys. Functionally, involved in the plastidial phosphorylated pathway of serine biosynthesis (PPSB). This chain is D-3-phosphoglycerate dehydrogenase 2, chloroplastic (PGDH2), found in Arabidopsis thaliana (Mouse-ear cress).